The following is a 331-amino-acid chain: Ribosomal RNA small subunit methyltransferase H (331 aa).

Residues 38-40, D56, F83, D100, and Q107 each bind S-adenosyl-L-methionine; that span reads GGY. The interval 289–331 is disordered; that stretch reads AELAENPRARSARLRVGVRTDAPAGKVDPQALGTPLIPKKGRR.

It belongs to the methyltransferase superfamily. RsmH family.

The protein resides in the cytoplasm. It catalyses the reaction cytidine(1402) in 16S rRNA + S-adenosyl-L-methionine = N(4)-methylcytidine(1402) in 16S rRNA + S-adenosyl-L-homocysteine + H(+). Functionally, specifically methylates the N4 position of cytidine in position 1402 (C1402) of 16S rRNA. The polypeptide is Ribosomal RNA small subunit methyltransferase H (Cereibacter sphaeroides (strain ATCC 17029 / ATH 2.4.9) (Rhodobacter sphaeroides)).